The sequence spans 389 residues: Urea transporter 1 (389 aa).

Helical transmembrane passes span 53-73, 91-110, 116-136, 143-163, and 173-193; these read PVVLQFIDWILRGISQVVFVN, WWALTGWLGTVVSTLMALLL, LIASGLYGYNATLVGVLMAVF, FWWLLLPVCAMSMTCPIFSSA, and LPVFTLPFNMALSMYLSATGH. Asn211 carries N-linked (GlcNAc...) asparagine glycosylation. 4 helical membrane-spanning segments follow: residues 242–262, 281–301, 310–330, and 333–353; these read GGIFLGAILLSSPLMCLHAAI, IYFGLWGFNSSLACIAMGGMF, LLALGCALFTAYLGVGMANFM, and VGLPACTWPFCLATLLFLIMT.

The protein belongs to the urea transporter family. As to quaternary structure, homotrimer; each subunit contains a pore through which urea permeates. Identified in a complex with STOM. Detected in erythrocytes (at protein level). Expressed in spleen erythroblasts and tumoral kidney.

The protein localises to the cell membrane. It localises to the basolateral cell membrane. It catalyses the reaction urea(in) = urea(out). Its activity is regulated as follows. Inhibited by phloretin and para-chloromercuribenzene sulfonate. Functionally, mediates the transport of urea driven by a concentration gradient across the cell membrane of erythrocytes. Also mediates the transport of urea across the cell membrane of the renal inner medullary collecting duct which is critical to the urinary concentrating mechanism. Facilitates water transport in erythrocytes. This is Urea transporter 1 (SLC14A1) from Homo sapiens (Human).